Here is a 698-residue protein sequence, read N- to C-terminus: Elongation factor G (698 aa).

One can recognise a tr-type G domain in the interval 8–290; it reads ERYRNIGISA…AVIEFLPSPV (283 aa). Residues 17–24, 88–92, and 142–145 contribute to the GTP site; these read AHIDAGKT, DTPGH, and NKMD.

The protein belongs to the TRAFAC class translation factor GTPase superfamily. Classic translation factor GTPase family. EF-G/EF-2 subfamily.

The protein localises to the cytoplasm. Catalyzes the GTP-dependent ribosomal translocation step during translation elongation. During this step, the ribosome changes from the pre-translocational (PRE) to the post-translocational (POST) state as the newly formed A-site-bound peptidyl-tRNA and P-site-bound deacylated tRNA move to the P and E sites, respectively. Catalyzes the coordinated movement of the two tRNA molecules, the mRNA and conformational changes in the ribosome. In Azoarcus sp. (strain BH72), this protein is Elongation factor G.